The chain runs to 462 residues: Protein MOS2 (462 aa).

Positions 1 to 10 are enriched in low complexity; that stretch reads MKLSFSLPSK. Residues 1–32 form a disordered region; sequence MKLSFSLPSKSKPKVTATTADGNNAVDDGTSK. Residues 156–202 enclose the G-patch domain; sequence VDGFGAALMAGYGWKPGKGIGKNAKEDVEIKEYKKWTAKEGLGFDPD. One can recognise a KOW 1 domain in the interval 231–258; sequence VFFVGKEVRIIAGRDVGLKGKIVEKPGS. Positions 301-336 are enriched in basic and acidic residues; that stretch reads DREKDKKTSGRGRGAERGSRSEVRASEKQDRGQTRE. A disordered region spans residues 301-340; the sequence is DREKDKKTSGRGRGAERGSRSEVRASEKQDRGQTRERKVK. The 28-residue stretch at 401 to 428 folds into the KOW 2 domain; the sequence is LPRRGGPVLVLSGKHKGVYGNLVEKDLD.

It belongs to the MOS2 family.

It localises to the nucleus. Its function is as follows. Required for innate and induced resistance to pathogens such as compatible and incompatible isolates of P.syringae and P.parasitica. This chain is Protein MOS2 (MOS2), found in Arabidopsis thaliana (Mouse-ear cress).